The primary structure comprises 401 residues: Leucine aminopeptidase 1 (401 aa).

The N-terminal stretch at 1–18 (MKVAKASLLTILAHSVSA) is a signal peptide. Positions 19–87 (RFLAEDEINR…GATRLRTKTK (69 aa)) are excised as a propeptide. The N-linked (GlcNAc...) asparagine glycan is linked to Asn179. The Zn(2+) site is built by His187, Asp206, Glu245, and Asp272. Cys321 and Cys325 are joined by a disulfide. Residue His354 participates in Zn(2+) binding.

The protein belongs to the peptidase M28 family. M28E subfamily. Monomer. Requires Zn(2+) as cofactor.

It localises to the secreted. Its function is as follows. Extracellular aminopeptidase that allows assimilation of proteinaceous substrates. This chain is Leucine aminopeptidase 1 (LAP1), found in Colletotrichum graminicola (strain M1.001 / M2 / FGSC 10212) (Maize anthracnose fungus).